Here is a 181-residue protein sequence, read N- to C-terminus: Translation initiation factor IF-3, chloroplastic (181 aa).

The protein belongs to the IF-3 family. As to quaternary structure, monomer.

The protein localises to the plastid. The protein resides in the chloroplast. Its function is as follows. IF-3 binds to the 30S ribosomal subunit and shifts the equilibrium between 70S ribosomes and their 50S and 30S subunits in favor of the free subunits, thus enhancing the availability of 30S subunits on which protein synthesis initiation begins. The sequence is that of Translation initiation factor IF-3, chloroplastic from Gracilaria tenuistipitata var. liui (Red alga).